The sequence spans 991 residues: 5'-3' exoribonuclease 2 (991 aa).

The Nuclear localization signal motif lies at 264–268; that stretch reads TKKTK. Residues 404–418 are compositionally biased toward basic and acidic residues; it reads RRNENYRRRQQRESN. 3 disordered regions span residues 404-461, 547-582, and 872-991; these read RRNE…TQKI, SIESSTPVVHPIDTKVSNVGQKRKAPDSTEENENTD, and AERS…NGYY. The segment covering 433–452 has biased composition (low complexity); sequence SVETQSTEVVTSSKSTSVDT. Low complexity-rich tracts occupy residues 878–889 and 896–910; these read SRRNNGNSYRGG and RRSYQSQSYSSRQSY. A compositionally biased stretch (polar residues) spans 926–938; it reads WSGNGNFPRSNAS. The span at 946-958 shows a compositional bias: gly residues; that stretch reads EGYGGRSRGGGYS. Residues 980 to 991 are compositionally biased toward polar residues; it reads ESYNNNNRNGYY.

It belongs to the 5'-3' exonuclease family. XRN2/RAT1 subfamily. In terms of assembly, interacts with din1/rai1; the interaction is direct, stabilizes dhp1 protein structure and may stimulate its exoribonuclease activity. The interaction also stimulates din1 pyrophosphohydrolase activity, probably by recruiting it to mRNA substrates.

Its subcellular location is the nucleus. Possesses 5'-&gt;3' exoribonuclease activity. Required for the processing of nuclear mRNA and rRNA precursors. May promote the termination of transcription by RNA polymerase II. Essential for vegetative cell growth and chromosome segregation. This Schizosaccharomyces pombe (strain 972 / ATCC 24843) (Fission yeast) protein is 5'-3' exoribonuclease 2 (dhp1).